Reading from the N-terminus, the 388-residue chain is Probable ubiquitin-conjugating enzyme E2 L709 (388 aa).

Residues Asn3 to Phe162 enclose the UBC core domain. Catalysis depends on Cys95, which acts as the Glycyl thioester intermediate. The interval Val195 to Lys388 is disordered. 2 stretches are compositionally biased toward acidic residues: residues Ser221–Ser238 and Asp246–Glu297. The span at Lys310 to Lys388 shows a compositional bias: low complexity.

The protein belongs to the ubiquitin-conjugating enzyme family.

The enzyme catalyses S-ubiquitinyl-[E1 ubiquitin-activating enzyme]-L-cysteine + [E2 ubiquitin-conjugating enzyme]-L-cysteine = [E1 ubiquitin-activating enzyme]-L-cysteine + S-ubiquitinyl-[E2 ubiquitin-conjugating enzyme]-L-cysteine.. Its pathway is protein modification; protein ubiquitination. Functionally, catalyzes the covalent attachment of ubiquitin to other proteins. In Acanthamoeba polyphaga (Amoeba), this protein is Probable ubiquitin-conjugating enzyme E2 L709.